A 388-amino-acid polypeptide reads, in one-letter code: Bifunctional enzyme IspD/IspF (388 aa).

The segment at 1 to 228 (MRIAALLLAA…GVIDRNLLPR (228 aa)) is 2-C-methyl-D-erythritol 4-phosphate cytidylyltransferase. Residues 228–388 (RVGLGYDVHA…SIMVPDNGEA (161 aa)) are 2-C-methyl-D-erythritol 2,4-cyclodiphosphate synthase. The a divalent metal cation site is built by Asp-234 and His-236. 4-CDP-2-C-methyl-D-erythritol 2-phosphate-binding positions include 234–236 (DVH) and 260–261 (HS). His-268 contacts a divalent metal cation. Residues 282–284 (DIG), 358–361 (TTSE), Phe-365, and Arg-368 each bind 4-CDP-2-C-methyl-D-erythritol 2-phosphate.

This sequence in the N-terminal section; belongs to the IspD/TarI cytidylyltransferase family. IspD subfamily. In the C-terminal section; belongs to the IspF family. It depends on a divalent metal cation as a cofactor.

The catalysed reaction is 2-C-methyl-D-erythritol 4-phosphate + CTP + H(+) = 4-CDP-2-C-methyl-D-erythritol + diphosphate. It carries out the reaction 4-CDP-2-C-methyl-D-erythritol 2-phosphate = 2-C-methyl-D-erythritol 2,4-cyclic diphosphate + CMP. The protein operates within isoprenoid biosynthesis; isopentenyl diphosphate biosynthesis via DXP pathway; isopentenyl diphosphate from 1-deoxy-D-xylulose 5-phosphate: step 2/6. Its pathway is isoprenoid biosynthesis; isopentenyl diphosphate biosynthesis via DXP pathway; isopentenyl diphosphate from 1-deoxy-D-xylulose 5-phosphate: step 4/6. Functionally, bifunctional enzyme that catalyzes the formation of 4-diphosphocytidyl-2-C-methyl-D-erythritol from CTP and 2-C-methyl-D-erythritol 4-phosphate (MEP) (IspD), and catalyzes the conversion of 4-diphosphocytidyl-2-C-methyl-D-erythritol 2-phosphate (CDP-ME2P) to 2-C-methyl-D-erythritol 2,4-cyclodiphosphate (ME-CPP) with a corresponding release of cytidine 5-monophosphate (CMP) (IspF). The protein is Bifunctional enzyme IspD/IspF of Gluconobacter oxydans (strain 621H) (Gluconobacter suboxydans).